The chain runs to 35 residues: Photosystem II reaction center protein M (35 aa).

Residues 5–25 (ILAFIATALFIIIPTAFLLIL) form a helical membrane-spanning segment.

It belongs to the PsbM family. As to quaternary structure, PSII is composed of 1 copy each of membrane proteins PsbA, PsbB, PsbC, PsbD, PsbE, PsbF, PsbH, PsbI, PsbJ, PsbK, PsbL, PsbM, PsbT, PsbX, PsbY, PsbZ, Psb30/Ycf12, at least 3 peripheral proteins of the oxygen-evolving complex and a large number of cofactors. It forms dimeric complexes.

The protein localises to the plastid. Its subcellular location is the chloroplast thylakoid membrane. In terms of biological role, one of the components of the core complex of photosystem II (PSII). PSII is a light-driven water:plastoquinone oxidoreductase that uses light energy to abstract electrons from H(2)O, generating O(2) and a proton gradient subsequently used for ATP formation. It consists of a core antenna complex that captures photons, and an electron transfer chain that converts photonic excitation into a charge separation. This subunit is found at the monomer-monomer interface. The sequence is that of Photosystem II reaction center protein M from Chara vulgaris (Common stonewort).